The sequence spans 347 residues: GMP reductase (347 aa).

Position 108–131 (108–131 (ADFQKTKDIMALTDDLIFICIDIA)) interacts with NADP(+). Gly181 and Gly183 together coordinate K(+). Cys186 serves as the catalytic Thioimidate intermediate. An NADP(+)-binding site is contributed by 216–239 (IIGDGGCSCAGDVSKAFGGGADFV).

It belongs to the IMPDH/GMPR family. GuaC type 1 subfamily. As to quaternary structure, homotetramer.

It carries out the reaction IMP + NH4(+) + NADP(+) = GMP + NADPH + 2 H(+). Catalyzes the irreversible NADPH-dependent deamination of GMP to IMP. It functions in the conversion of nucleobase, nucleoside and nucleotide derivatives of G to A nucleotides, and in maintaining the intracellular balance of A and G nucleotides. In Aliivibrio fischeri (strain MJ11) (Vibrio fischeri), this protein is GMP reductase.